We begin with the raw amino-acid sequence, 245 residues long: Small ribosomal subunit protein uS3 (245 aa).

A KH type-2 domain is found at 39–107 (IRKAIREKLK…EVRVNLVEIR (69 aa)). Residues 216–245 (DKRLETSGQSRARANTNQRGPASGAQAAGA) are disordered. Positions 221 to 235 (TSGQSRARANTNQRG) are enriched in polar residues.

Belongs to the universal ribosomal protein uS3 family. As to quaternary structure, part of the 30S ribosomal subunit. Forms a tight complex with proteins S10 and S14.

Binds the lower part of the 30S subunit head. Binds mRNA in the 70S ribosome, positioning it for translation. This chain is Small ribosomal subunit protein uS3, found in Hyphomonas neptunium (strain ATCC 15444).